The primary structure comprises 250 residues: NAD(P)H-quinone oxidoreductase subunit K, chloroplastic (250 aa).

[4Fe-4S] cluster contacts are provided by Cys-67, Cys-68, Cys-132, and Cys-163.

The protein belongs to the complex I 20 kDa subunit family. As to quaternary structure, NDH is composed of at least 16 different subunits, 5 of which are encoded in the nucleus. It depends on [4Fe-4S] cluster as a cofactor.

The protein resides in the plastid. Its subcellular location is the chloroplast thylakoid membrane. It catalyses the reaction a plastoquinone + NADH + (n+1) H(+)(in) = a plastoquinol + NAD(+) + n H(+)(out). The enzyme catalyses a plastoquinone + NADPH + (n+1) H(+)(in) = a plastoquinol + NADP(+) + n H(+)(out). In terms of biological role, NDH shuttles electrons from NAD(P)H:plastoquinone, via FMN and iron-sulfur (Fe-S) centers, to quinones in the photosynthetic chain and possibly in a chloroplast respiratory chain. The immediate electron acceptor for the enzyme in this species is believed to be plastoquinone. Couples the redox reaction to proton translocation, and thus conserves the redox energy in a proton gradient. The polypeptide is NAD(P)H-quinone oxidoreductase subunit K, chloroplastic (Adiantum capillus-veneris (Maidenhair fern)).